The chain runs to 369 residues: UPF0283 membrane protein RPA1583 (369 aa).

Positions 1–61 are disordered; it reads MTERVPPRRP…APPPPPPRAR (61 aa). Positions 34–51 are enriched in low complexity; it reads AKPSAKADARPAASAAGA. The next 3 membrane-spanning stretches (helical) occupy residues 90-110, 124-144, and 239-259; these read WGTVFWSAATGLVSLAFWLWI, LGTIGMVLALLAGGSLAIIIG, and VSLVTAISPKALIDVLFVAIA.

Belongs to the UPF0283 family.

It is found in the cell inner membrane. The sequence is that of UPF0283 membrane protein RPA1583 from Rhodopseudomonas palustris (strain ATCC BAA-98 / CGA009).